The following is a 664-amino-acid chain: MDKEAVKKRIEELRALLHYHNYRYYVLDQPEISDAEYDRMLRELISLEQQYPEFITPDSPSQRVGGEVAKEFREVAHLKPMYSLDNAFGPEDLKEFDRRVRSLLPGQEVEYEVELKIDGLAISLVYENGVLVRGATRGNGTTGEDITANVKTIKAIPLKLRNPIPLLEVRGEAYMPKESFARLNEQREERGEPLFANPRNAAAGSLRQLDPKVTAERDLSAFMYAIGEVQGYEPKTQAELMEWLSELGFKVNPYREVFNNIDDVINYCQSWHEKRFSLPYVIDGLVIKVNSLAQQEALGFTAKSPRWAIAYKFPAEIAETRLKDIIVRVGRTGVLTPTAIFEPVSLAGTTVTRASLHNEDYIREKDIRIGDIIRVQKAGEIIPEVVEVVKEKRTGAEKEFVMPDTCPVCQGKAVRLPGEAAWRCTNASCPAQLKEGIVHFASRGAMNIEGLGPAVAELLLEAGLIHNYADLYYLSAEEVARLPRMGKKSAENLINAIEKSKQNSLERLIYGLGIRLVGEKAARDLAVHFKELDKLIAAGEEEIMAIPSVGPKMAASIKAFFAQKENLELIEKLKAAGVNTKYLAEVRDNRLEGLTFVLTGTLSSFTRKEAEQLILSLGGKVSSSVSKKTSYVVVGEDPGSKLTKAKELGIPILTEEEFRQMVMS.

NAD(+)-binding positions include Asp34–Asp38, Ser83–Leu84, and Glu114. Lys116 serves as the catalytic N6-AMP-lysine intermediate. Residues Arg137, Glu172, Lys288, and Lys312 each coordinate NAD(+). 4 residues coordinate Zn(2+): Cys406, Cys409, Cys424, and Cys429. The 79-residue stretch at Val586–Ser664 folds into the BRCT domain.

It belongs to the NAD-dependent DNA ligase family. LigA subfamily. Requires Mg(2+) as cofactor. Mn(2+) is required as a cofactor.

It carries out the reaction NAD(+) + (deoxyribonucleotide)n-3'-hydroxyl + 5'-phospho-(deoxyribonucleotide)m = (deoxyribonucleotide)n+m + AMP + beta-nicotinamide D-nucleotide.. Functionally, DNA ligase that catalyzes the formation of phosphodiester linkages between 5'-phosphoryl and 3'-hydroxyl groups in double-stranded DNA using NAD as a coenzyme and as the energy source for the reaction. It is essential for DNA replication and repair of damaged DNA. The chain is DNA ligase from Carboxydothermus hydrogenoformans (strain ATCC BAA-161 / DSM 6008 / Z-2901).